The following is a 102-amino-acid chain: NADH-quinone oxidoreductase subunit K (102 aa).

Transmembrane regions (helical) follow at residues Met6–Ile26, Leu30–Val50, and Ile65–Leu85.

This sequence belongs to the complex I subunit 4L family. As to quaternary structure, NDH-1 is composed of 14 different subunits. Subunits NuoA, H, J, K, L, M, N constitute the membrane sector of the complex.

The protein localises to the cell inner membrane. The catalysed reaction is a quinone + NADH + 5 H(+)(in) = a quinol + NAD(+) + 4 H(+)(out). In terms of biological role, NDH-1 shuttles electrons from NADH, via FMN and iron-sulfur (Fe-S) centers, to quinones in the respiratory chain. The immediate electron acceptor for the enzyme in this species is believed to be ubiquinone. Couples the redox reaction to proton translocation (for every two electrons transferred, four hydrogen ions are translocated across the cytoplasmic membrane), and thus conserves the redox energy in a proton gradient. This is NADH-quinone oxidoreductase subunit K from Aeromonas salmonicida (strain A449).